The following is a 179-amino-acid chain: Large ribosomal subunit protein uL5 (179 aa).

The protein belongs to the universal ribosomal protein uL5 family. In terms of assembly, part of the 50S ribosomal subunit; part of the 5S rRNA/L5/L18/L25 subcomplex. Contacts the 5S rRNA and the P site tRNA. Forms a bridge to the 30S subunit in the 70S ribosome.

In terms of biological role, this is one of the proteins that bind and probably mediate the attachment of the 5S RNA into the large ribosomal subunit, where it forms part of the central protuberance. In the 70S ribosome it contacts protein S13 of the 30S subunit (bridge B1b), connecting the 2 subunits; this bridge is implicated in subunit movement. Contacts the P site tRNA; the 5S rRNA and some of its associated proteins might help stabilize positioning of ribosome-bound tRNAs. The protein is Large ribosomal subunit protein uL5 of Prochlorococcus marinus (strain MIT 9301).